Here is a 529-residue protein sequence, read N- to C-terminus: Bifunctional purine biosynthesis protein PurH (529 aa).

The MGS-like domain maps to 1–148 (MNNARPIRRA…KNHKDVVIVV (148 aa)).

It belongs to the PurH family.

The catalysed reaction is (6R)-10-formyltetrahydrofolate + 5-amino-1-(5-phospho-beta-D-ribosyl)imidazole-4-carboxamide = 5-formamido-1-(5-phospho-D-ribosyl)imidazole-4-carboxamide + (6S)-5,6,7,8-tetrahydrofolate. The enzyme catalyses IMP + H2O = 5-formamido-1-(5-phospho-D-ribosyl)imidazole-4-carboxamide. It functions in the pathway purine metabolism; IMP biosynthesis via de novo pathway; 5-formamido-1-(5-phospho-D-ribosyl)imidazole-4-carboxamide from 5-amino-1-(5-phospho-D-ribosyl)imidazole-4-carboxamide (10-formyl THF route): step 1/1. It participates in purine metabolism; IMP biosynthesis via de novo pathway; IMP from 5-formamido-1-(5-phospho-D-ribosyl)imidazole-4-carboxamide: step 1/1. This is Bifunctional purine biosynthesis protein PurH from Shewanella amazonensis (strain ATCC BAA-1098 / SB2B).